The chain runs to 152 residues: Membrane-spanning 4-domains subfamily A member 13 (152 aa).

4 helical membrane passes run 1–21, 32–52, 66–86, and 111–131; these read MIGI…MGQI, TYKT…VFLI, TLII…LTII, and ILLF…IYSC.

This sequence belongs to the MS4A family.

Its subcellular location is the membrane. May be involved in signal transduction as a component of a multimeric receptor complex. The polypeptide is Membrane-spanning 4-domains subfamily A member 13 (MS4A13) (Homo sapiens (Human)).